The following is a 727-amino-acid chain: Iron-sulfur clusters transporter atm1, mitochondrial (727 aa).

Residues 46–97 (NSPLRKDASKEPALASNSKTTNPIPTQASASVNPPKDARNATTAKKDLLSET) are disordered. A compositionally biased stretch (polar residues) spans 60-77 (ASNSKTTNPIPTQASASV). Over residues 81 to 94 (KDARNATTAKKDLL) the composition is skewed to basic and acidic residues. The helical transmembrane segment at 131–152 (VGTALSLLVGAKILNVEVPFYF) threads the bilayer. Residues 131–421 (VGTALSLLVG…LGSVYRELRQ (291 aa)) form the ABC transmembrane type-1 domain. At 153 to 175 (KSIVDSMNIDFATVGGTAYTVAG) the chain is on the mitochondrial intermembrane side. A helical transmembrane segment spans residues 176–199 (SMIIAYGVTRIGATLFQELRNAVF). The Mitochondrial matrix portion of the chain corresponds to 200–248 (ASVAQKAIRRVARNVFEHLLRLDLNFHLSRQTGGLTRAIDRGTKGISFL). Residues 249–272 (LTSMVFHVVPTALEISLVCGILTY) form a helical membrane-spanning segment. A topological domain (mitochondrial intermembrane) is located at residue Gln-273. The chain crosses the membrane as a helical span at residues 274-294 (YGFQFAAITAATMVAYTAFTI). Residues 295–360 (TTTAWRTKFR…ASIKVTTSLA (66 aa)) are Mitochondrial matrix-facing. Glutathione contacts are provided by residues 300–304 (RTKFR) and 363–366 (NSGQ). Residues 361–379 (FLNSGQNMIFSSALAAMMY) traverse the membrane as a helical segment. Residues 380–394 (LAANGVANGNLTVGD) are Mitochondrial intermembrane-facing. Residues 395 to 416 (LVMVNQLVFQLSVPLNFLGSVY) form a helical membrane-spanning segment. Gly-413 contributes to the glutathione binding site. Residues 417–727 (RELRQSLLDM…DMAPGPKAQQ (311 aa)) lie on the Mitochondrial matrix side of the membrane. The ABC transporter domain maps to 456–692 (IRFENVTFGY…NGIYAELWNA (237 aa)). ATP-binding positions include Tyr-465 and 489 to 500 (GPSGCGKSTILR). Over residues 702–719 (EFERETERDDVESKERDM) the composition is skewed to basic and acidic residues. Positions 702 to 727 (EFERETERDDVESKERDMAPGPKAQQ) are disordered.

It belongs to the ABC transporter superfamily. ABCB family. Heavy Metal importer (TC 3.A.1.210) subfamily. As to quaternary structure, homodimer.

The protein resides in the mitochondrion inner membrane. Its function is as follows. Performs an essential function in the generation of cytoplasmic iron-sulfur proteins by mediating the ATP-dependent export of Fe/S cluster precursors synthesized by nfs1 and other mitochondrial proteins. Hydrolyzes ATP. Binds glutathione and may function by transporting a glutathione-conjugated iron-sulfur compound. The polypeptide is Iron-sulfur clusters transporter atm1, mitochondrial (Aspergillus fumigatus (strain ATCC MYA-4609 / CBS 101355 / FGSC A1100 / Af293) (Neosartorya fumigata)).